Here is a 427-residue protein sequence, read N- to C-terminus: Glutamate-1-semialdehyde 2,1-aminomutase (427 aa).

Lysine 265 is subject to N6-(pyridoxal phosphate)lysine.

Belongs to the class-III pyridoxal-phosphate-dependent aminotransferase family. HemL subfamily. As to quaternary structure, homodimer. Pyridoxal 5'-phosphate is required as a cofactor.

It is found in the cytoplasm. It catalyses the reaction (S)-4-amino-5-oxopentanoate = 5-aminolevulinate. It functions in the pathway porphyrin-containing compound metabolism; protoporphyrin-IX biosynthesis; 5-aminolevulinate from L-glutamyl-tRNA(Glu): step 2/2. This Burkholderia cenocepacia (strain ATCC BAA-245 / DSM 16553 / LMG 16656 / NCTC 13227 / J2315 / CF5610) (Burkholderia cepacia (strain J2315)) protein is Glutamate-1-semialdehyde 2,1-aminomutase.